A 338-amino-acid chain; its full sequence is N-acetyl-gamma-glutamyl-phosphate reductase (338 aa).

Cys-148 is an active-site residue.

It belongs to the NAGSA dehydrogenase family. Type 1 subfamily.

It localises to the cytoplasm. It catalyses the reaction N-acetyl-L-glutamate 5-semialdehyde + phosphate + NADP(+) = N-acetyl-L-glutamyl 5-phosphate + NADPH + H(+). It participates in amino-acid biosynthesis; L-arginine biosynthesis; N(2)-acetyl-L-ornithine from L-glutamate: step 3/4. Functionally, catalyzes the NADPH-dependent reduction of N-acetyl-5-glutamyl phosphate to yield N-acetyl-L-glutamate 5-semialdehyde. The polypeptide is N-acetyl-gamma-glutamyl-phosphate reductase (Leptospira borgpetersenii serovar Hardjo-bovis (strain JB197)).